The primary structure comprises 601 residues: Arginine--tRNA ligase (601 aa).

The short motif at 133–143 is the 'HIGH' region element; sequence PNTNKPLHLGH.

It belongs to the class-I aminoacyl-tRNA synthetase family. In terms of assembly, monomer.

The protein localises to the cytoplasm. The enzyme catalyses tRNA(Arg) + L-arginine + ATP = L-arginyl-tRNA(Arg) + AMP + diphosphate. This chain is Arginine--tRNA ligase, found in Flavobacterium psychrophilum (strain ATCC 49511 / DSM 21280 / CIP 103535 / JIP02/86).